Consider the following 415-residue polypeptide: Serine--tRNA ligase (415 aa).

231-233 (TAE) lines the L-serine pocket. 262–264 (RSE) contributes to the ATP binding site. Glu-285 contributes to the L-serine binding site. 349 to 352 (EISS) lines the ATP pocket. Ser-383 is a binding site for L-serine.

This sequence belongs to the class-II aminoacyl-tRNA synthetase family. Type-1 seryl-tRNA synthetase subfamily. As to quaternary structure, homodimer. The tRNA molecule binds across the dimer.

It is found in the cytoplasm. It catalyses the reaction tRNA(Ser) + L-serine + ATP = L-seryl-tRNA(Ser) + AMP + diphosphate + H(+). The enzyme catalyses tRNA(Sec) + L-serine + ATP = L-seryl-tRNA(Sec) + AMP + diphosphate + H(+). It participates in aminoacyl-tRNA biosynthesis; selenocysteinyl-tRNA(Sec) biosynthesis; L-seryl-tRNA(Sec) from L-serine and tRNA(Sec): step 1/1. Functionally, catalyzes the attachment of serine to tRNA(Ser). Is also able to aminoacylate tRNA(Sec) with serine, to form the misacylated tRNA L-seryl-tRNA(Sec), which will be further converted into selenocysteinyl-tRNA(Sec). This chain is Serine--tRNA ligase, found in Helicobacter pylori (strain Shi470).